Here is a 284-residue protein sequence, read N- to C-terminus: MVLMIVSGRSGSGKSVALRALEDMGFYCVDNLPVVLLPDLARTLADREISAAVSIDVRNMPESPEIFEQAMSNLPDAFSPQLLFLDADRNTLIRRYSDTRRLHPLSSKNLSLESAIDKESDLLEPLRSRADLIVDTSEMSVHELAEMLRTRLLGKRERELTMVFESFGFKHGIPIDADYVFDVRFLPNPHWDPKLRPMTGLDKPVAAFLDRHTEVHNFIYQTRSYLELWLPVLETNNRSYLTVAIGCTGGKHRSVYIAEQLADYFRSRGKNVQSRHRTLEKRKP.

8–15 is an ATP binding site; it reads GRSGSGKS. 56 to 59 serves as a coordination point for GTP; the sequence is DVRN. Positions 266–284 are RNA-binding; that stretch reads RSRGKNVQSRHRTLEKRKP.

It belongs to the RapZ-like family. RapZ subfamily. In terms of assembly, homotrimer.

Functionally, modulates the synthesis of GlmS, by affecting the processing and stability of the regulatory small RNA GlmZ. When glucosamine-6-phosphate (GlcN6P) concentrations are high in the cell, RapZ binds GlmZ and targets it to cleavage by RNase E. Consequently, GlmZ is inactivated and unable to activate GlmS synthesis. Under low GlcN6P concentrations, RapZ is sequestered and inactivated by an other regulatory small RNA, GlmY, preventing GlmZ degradation and leading to synthesis of GlmS. The polypeptide is RNase adapter protein RapZ (Escherichia coli O1:K1 / APEC).